The following is a 492-amino-acid chain: Metal cation symporter ZIP14 (492 aa).

The N-terminal stretch at 1–30 (MKLLLLHPAFQSCLLLTLLGLWRTTPEAHA) is a signal peptide. Over 31–157 (SSLGAPAISA…PSAVEVWGYG (127 aa)) the chain is Extracellular. Residues N77, N87, and N102 are each glycosylated (N-linked (GlcNAc...) asparagine). A helical transmembrane segment spans residues 158–178 (LLCVTVISLCSLLGASVVPFM). Over 179-186 (KKTFYKRL) the chain is Cytoplasmic. Residues 187–207 (LLYFIALAIGTLYSNALFQLI) form a helical membrane-spanning segment. Over 208-224 (PEAFGFNPLEDYYVSKS) the chain is Extracellular. Residues 225 to 245 (AVVFGGFYLFFFTEKILKILL) traverse the membrane as a helical segment. Over 246-397 (KQKNEHHHGH…LLNAGMSIQQ (152 aa)) the chain is Cytoplasmic. Residues 251–258 (HHHGHSHY) carry the HHHGHXHX-motif motif. The short motif at 376-381 (EEFPHE) is the XEXPHE-motif element. A helical transmembrane segment spans residues 398-418 (ALFFNFLSACCCYLGLAFGIL). The Extracellular segment spans residues 419 to 424 (AGSHFS). The helical transmembrane segment at 425–445 (ANWIFALAGGMFLYISLADMF) threads the bilayer. The Cytoplasmic segment spans residues 446–460 (PEMNEVCQEDERKGS). The helical transmembrane segment at 461-481 (ILIPFIIQNLGLLTGFTIMVV) threads the bilayer. The Extracellular portion of the chain corresponds to 482–492 (LTMYSGQIQIG).

It belongs to the ZIP transporter (TC 2.A.5) family. In terms of assembly, homotrimer. In terms of processing, ubiquitinated. Ubiquitination occurs upon iron depletion. The ubiquitinated form undergoes proteasomal degradation. N-glycosylated. N-glycosylation at Asn-102 is required for iron-regulated extraction of the transporter from membranes and subsequent proteasomal degradation. In terms of tissue distribution, ubiquitously expressed, with higher expression in liver, pancreas, fetal liver, thyroid gland, left and right ventricle, right atrium and fetal heart. Weakly expressed in spleen, thymus, and peripheral blood leukocytes. Expressed in liver and in brain by large neurons in the globus pallidus, the insular cortex and the dentate nucleus and to a lower extent in the putamen and the caudate nucleus (at protein level). Expressed in osteoblasts and giant osteoclast-like cells, but not in osteocytes found osteoblastoma and giant cell tumors (at protein level). Expressed by microvascular capillary endothelial cells that constitute the blood-brain barrier (at protein level). Expressed by macrophages. Widely expressed but not detected in brain, heart, skeletal muscle, placenta and fetal skin.

Its subcellular location is the cell membrane. The protein localises to the apical cell membrane. The protein resides in the basolateral cell membrane. It is found in the early endosome membrane. It localises to the late endosome membrane. Its subcellular location is the lysosome membrane. It carries out the reaction Zn(2+)(out) + 2 hydrogencarbonate(out) = Zn(2+)(in) + 2 hydrogencarbonate(in). The catalysed reaction is Mn(2+)(out) + 2 hydrogencarbonate(out) = Mn(2+)(in) + 2 hydrogencarbonate(in). It catalyses the reaction Fe(2+)(out) + 2 hydrogencarbonate(out) = Fe(2+)(in) + 2 hydrogencarbonate(in). The enzyme catalyses Cd(2+)(out) + 2 hydrogencarbonate(out) = Cd(2+)(in) + 2 hydrogencarbonate(in). Functionally, electroneutral transporter of the plasma membrane mediating the cellular uptake of the divalent metal cations zinc, manganese and iron that are important for tissue homeostasis, metabolism, development and immunity. Functions as an energy-dependent symporter, transporting through the membranes an electroneutral complex composed of a divalent metal cation and two bicarbonate anions. Beside these endogenous cellular substrates, can also import cadmium a non-essential metal which is cytotoxic and carcinogenic. Controls the cellular uptake by the intestinal epithelium of systemic zinc, which is in turn required to maintain tight junctions and the intestinal permeability. Modifies the activity of zinc-dependent phosphodiesterases, thereby indirectly regulating G protein-coupled receptor signaling pathways important for gluconeogenesis and chondrocyte differentiation. Regulates insulin receptor signaling, glucose uptake, glycogen synthesis and gluconeogenesis in hepatocytes through the zinc-dependent intracellular catabolism of insulin. Through zinc cellular uptake also plays a role in the adaptation of cells to endoplasmic reticulum stress. Major manganese transporter of the basolateral membrane of intestinal epithelial cells, it plays a central role in manganese systemic homeostasis through intestinal manganese uptake. Also involved in manganese extracellular uptake by cells of the blood-brain barrier. May also play a role in manganese and zinc homeostasis participating in their elimination from the blood through the hepatobiliary excretion. Also functions in the extracellular uptake of free iron. May also function intracellularly and mediate the transport from endosomes to cytosol of iron endocytosed by transferrin. Plays a role in innate immunity by regulating the expression of cytokines by activated macrophages. The protein is Metal cation symporter ZIP14 of Homo sapiens (Human).